The chain runs to 259 residues: Phosphatidylglycerol--prolipoprotein diacylglyceryl transferase (259 aa).

7 helical membrane passes run 9–29, 48–68, 83–103, 114–133, 167–187, 197–217, and 227–247; these read LGPL…ILAV, DFIL…YVIF, IWHG…VLFI, DFLD…GRWG, TPTF…IMIL, GEVA…IEGM, and LRVS…LIVI. Arg131 is a binding site for a 1,2-diacyl-sn-glycero-3-phospho-(1'-sn-glycerol).

Belongs to the Lgt family.

It localises to the cell membrane. The catalysed reaction is L-cysteinyl-[prolipoprotein] + a 1,2-diacyl-sn-glycero-3-phospho-(1'-sn-glycerol) = an S-1,2-diacyl-sn-glyceryl-L-cysteinyl-[prolipoprotein] + sn-glycerol 1-phosphate + H(+). Its pathway is protein modification; lipoprotein biosynthesis (diacylglyceryl transfer). Functionally, catalyzes the transfer of the diacylglyceryl group from phosphatidylglycerol to the sulfhydryl group of the N-terminal cysteine of a prolipoprotein, the first step in the formation of mature lipoproteins. The polypeptide is Phosphatidylglycerol--prolipoprotein diacylglyceryl transferase (Streptococcus mutans serotype c (strain ATCC 700610 / UA159)).